A 122-amino-acid polypeptide reads, in one-letter code: Small ribosomal subunit protein bS6 (122 aa).

The protein belongs to the bacterial ribosomal protein bS6 family.

In terms of biological role, binds together with bS18 to 16S ribosomal RNA. This chain is Small ribosomal subunit protein bS6, found in Trichlorobacter lovleyi (strain ATCC BAA-1151 / DSM 17278 / SZ) (Geobacter lovleyi).